A 659-amino-acid chain; its full sequence is ATP-binding cassette sub-family D member 3 (659 aa).

The segment at 1 to 61 (MAAFSKYLTA…GKKERAVVDK (61 aa)) is interaction with PEX19. N12 carries N-linked (GlcNAc...) asparagine glycosylation. K61 carries the post-translational modification N6-acetyllysine. Residues 84–104 (GYLLLIAVMLVSRTYCDVWMI) form a helical membrane-spanning segment. In terms of domain architecture, ABC transmembrane type-1 spans 85-372 (YLLLIAVMLV…MLLRMSQALG (288 aa)). N106 carries N-linked (GlcNAc...) asparagine glycosylation. Residues 126–146 (LFNFIAAMPLISLVNNFLKYG) traverse the membrane as a helical segment. N206 carries an N-linked (GlcNAc...) asparagine glycan. Residues 224-244 (AIGAQGPASMMAYLLVSGLFL) form a helical membrane-spanning segment. N6-acetyllysine is present on K260. Residues 313–333 (MGFIDSIIAKYVATVVGYLVV) form a helical membrane-spanning segment. K399 is modified (N6-acetyllysine). S424 bears the Phosphoserine mark. The region spanning 434–659 (INTDNIIKFD…ITEDTVEFGS (226 aa)) is the ABC transporter domain. Residue 473 to 480 (GPNGCGKS) participates in ATP binding. Position 533 is an N6-acetyllysine (K533). S659 is subject to Phosphoserine.

This sequence belongs to the ABC transporter superfamily. ABCD family. Peroxisomal fatty acyl CoA transporter (TC 3.A.1.203) subfamily. Homodimers. Can form heterodimers with ABCD1 and ABCD2. Dimerization is necessary to form an active transporter. Interacts with PEX19; mediates the targeting of ABCD3 to peroxisomes. Post-translationally, ubiquitinated by PEX2 during pexophagy in response to starvation, leading to its degradation.

Its subcellular location is the peroxisome membrane. The catalysed reaction is a very long-chain fatty acyl-CoA + H2O = a very long-chain fatty acid + CoA + H(+). It catalyses the reaction a very long-chain fatty acid(in) + ATP + H2O = a very long-chain fatty acid(out) + ADP + phosphate + H(+). The enzyme catalyses a long-chain fatty acyl-CoA + H2O = a long-chain fatty acid + CoA + H(+). It carries out the reaction a long-chain fatty acid(in) + ATP + H2O = a long-chain fatty acid(out) + ADP + phosphate + H(+). The catalysed reaction is pristanoyl-CoA + H2O = 2,6,10,14-tetramethylpentadecanoate + CoA + H(+). It catalyses the reaction 2,6,10,14-tetramethylpentadecanoate(in) + ATP + H2O = 2,6,10,14-tetramethylpentadecanoate(out) + ADP + phosphate + H(+). The enzyme catalyses hexadecanedioyl-CoA + H2O = hexadecanedioate + CoA + H(+). It carries out the reaction hexadecanedioate(in) + ATP + H2O = hexadecanedioate(out) + ADP + phosphate + H(+). The catalysed reaction is (5Z,8Z,11Z,14Z,17Z)-eicosapentaenoyl-CoA + H2O = (5Z,8Z,11Z,14Z,17Z)-eicosapentaenoate + CoA + H(+). It catalyses the reaction (5Z,8Z,11Z,14Z,17Z)-eicosapentaenoate(in) + ATP + H2O = (5Z,8Z,11Z,14Z,17Z)-eicosapentaenoate(out) + ADP + phosphate + H(+). The enzyme catalyses (4Z,7Z,10Z,13Z,16Z,19Z)-docosahexaenoyl-CoA + H2O = (4Z,7Z,10Z,13Z,16Z,19Z)-docosahexaenoate + CoA + H(+). It carries out the reaction (4Z,7Z,10Z,13Z,16Z,19Z)-docosahexaenoate(in) + ATP + H2O = (4Z,7Z,10Z,13Z,16Z,19Z)-docosahexaenoate(out) + ADP + phosphate + H(+). In terms of biological role, broad substrate specificity ATP-dependent transporter of the ATP-binding cassette (ABC) family that catalyzes the transport of long-chain fatty acids (LCFA)-CoA, dicarboxylic acids-CoA, long-branched-chain fatty acids-CoA and bile acids from the cytosol to the peroxisome lumen for beta-oxydation. Has fatty acyl-CoA thioesterase and ATPase activities. Probably hydrolyzes fatty acyl-CoAs into free fatty acids prior to their ATP-dependent transport into peroxisomes. Thus, play a role in regulation of LCFAs and energy metabolism namely, in the degradation and biosynthesis of fatty acids by beta-oxidation. The sequence is that of ATP-binding cassette sub-family D member 3 (Abcd3) from Mus musculus (Mouse).